A 92-amino-acid polypeptide reads, in one-letter code: Small ribosomal subunit protein uS19 (92 aa).

The protein belongs to the universal ribosomal protein uS19 family.

In terms of biological role, protein S19 forms a complex with S13 that binds strongly to the 16S ribosomal RNA. In Mycoplasmopsis agalactiae (strain NCTC 10123 / CIP 59.7 / PG2) (Mycoplasma agalactiae), this protein is Small ribosomal subunit protein uS19.